The chain runs to 205 residues: Thymidine kinase (205 aa).

ATP-binding positions include 9–16 (SAMNAGKT) and 88–91 (DECH). E89 serves as the catalytic Proton acceptor. Zn(2+)-binding residues include C146, C148, C183, and H186.

It belongs to the thymidine kinase family. In terms of assembly, homotetramer.

The protein localises to the cytoplasm. The catalysed reaction is thymidine + ATP = dTMP + ADP + H(+). The protein is Thymidine kinase of Blochmanniella pennsylvanica (strain BPEN).